The following is a 247-amino-acid chain: Epidermal cell differentiation inhibitor (247 aa).

An N-terminal signal peptide occupies residues 1 to 35 (MKNKLLFKIFLSLSLALSVYSINDKIIEVSNTSLA). Residues 39–247 (KNFTDLDEAT…IIITAIVFKK (209 aa)) form the TR mART core domain. Residues Arg-120, Ser-173, and Glu-215 contribute to the active site.

To ADP-ribosyltransferase C3 of Clostridium.

In terms of biological role, inhibits terminal differentiation of cultured mouse keratinocytes. In culture, also inhibits the differentiation of human keratinocytes. Probable ADP-ribosyltransferase. The chain is Epidermal cell differentiation inhibitor from Staphylococcus aureus.